The sequence spans 486 residues: Transmembrane protein 39A (486 aa).

N-linked (GlcNAc...) asparagine glycosylation occurs at N31. Helical transmembrane passes span 72–92 (SLFFEFLFFIYLLIVLFIQYI), 110–130 (TSLNFHLIDYYLAAFITVMLA), 155–175 (LILARLVLLTLCGWVLCWTLV), 182–202 (SVLNLLFLGYPFGVYVPLYCF), 285–305 (EVLFNSLFSAYYVAFLPLCFV), 317–337 (CEHLIMVWINAFVMLTTQLLP), 418–438 (VLNLLILIEGSVVFYQLYSLL), and 444–464 (NHTLSMALILFCNYYVLFKLL).

The protein belongs to the TMEM39 family. In terms of assembly, interacts with SACM1L, SEC23A and SEC24A.

It localises to the endoplasmic reticulum membrane. In terms of biological role, regulates autophagy by controlling the spatial distribution and levels of the intracellular phosphatidylinositol 4-phosphate (PtdIns(4)P) pools. Modulates (PtdIns(4)P) levels by regulating the ER-to-Golgi trafficking of the phosphatidylinositide phosphatase SACM1L. This chain is Transmembrane protein 39A (Tmem39a), found in Mus musculus (Mouse).